The primary structure comprises 101 residues: Protein RnfH (101 aa).

The protein belongs to the UPF0125 (RnfH) family.

The polypeptide is Protein RnfH (Pseudomonas aeruginosa (strain UCBPP-PA14)).